The sequence spans 104 residues: Putative thioredoxin-4 (104 aa).

The 103-residue stretch at 2–104 folds into the Thioredoxin domain; it reads SKVTNVSINT…QLRKILDSMK (103 aa). Catalysis depends on nucleophile residues Cys-31 and Cys-34. A disulfide bridge connects residues Cys-31 and Cys-34.

Belongs to the thioredoxin family.

Participates in various redox reactions through the reversible oxidation of its active center dithiol to a disulfide and catalyzes dithiol-disulfide exchange reactions. The sequence is that of Putative thioredoxin-4 (trxD) from Dictyostelium discoideum (Social amoeba).